A 303-amino-acid polypeptide reads, in one-letter code: MSIANDNPNARPVVVLGPTACGKTRLAVALARAFAGEVVSADSRQVFRGMDIGTGKDLQDYGDTPYHLIDIVDPGAPFSLFDYLGAMQRTLDDLDAREKRPIIAGGSGLYLDAILRGYRLVEAPVDPLLRERLKHHDQERLNALLASLRPLHNTTDTQDRERTLRAIEIAYAELNEDSPSVQISIDPVVIGLHCDNDRLRARIRERLETRLDEGLIEEVESLRAEGLSWRQLDELGLEYRYVALYLQEQLNRNDMMQKLASAIYLFARQQVKWFRRMERQGVAIHWLEADDAPLDNALALLRR.

Residue 17-24 coordinates ATP; sequence GPTACGKT. Residue 19-24 coordinates substrate; it reads TACGKT. The interval 42-45 is interaction with substrate tRNA; sequence DSRQ.

This sequence belongs to the IPP transferase family. In terms of assembly, monomer. Requires Mg(2+) as cofactor.

The catalysed reaction is adenosine(37) in tRNA + dimethylallyl diphosphate = N(6)-dimethylallyladenosine(37) in tRNA + diphosphate. Catalyzes the transfer of a dimethylallyl group onto the adenine at position 37 in tRNAs that read codons beginning with uridine, leading to the formation of N6-(dimethylallyl)adenosine (i(6)A). The protein is tRNA dimethylallyltransferase 1 of Hahella chejuensis (strain KCTC 2396).